The chain runs to 150 residues: C-type natriuretic peptide (150 aa).

An N-terminal signal peptide occupies residues 1-31 (MSISSSSSSSSSSSSCLLLISLMLLAASCQG). Positions 32 to 127 (RPDLQHRNHK…RKMFRGRTKK (96 aa)) are excised as a propeptide. Positions 60–73 (GAADGSSGEEAALS) are enriched in low complexity. The segment at 60–109 (GAADGSSGEEAALSQRAPPSIRALHPRSGRLGLRDDLEAEPPAENKPRRR) is disordered. C134 and C150 are joined by a disulfide.

Belongs to the natriuretic peptide family. Expressed in brain, but not in atrium or ventricle.

The protein resides in the secreted. In terms of biological role, hormone which plays a role in endochondral ossification through regulation of cartilaginous growth plate chondrocytes proliferation and differentiation. May also be vasoactive and natriuretic. The sequence is that of C-type natriuretic peptide (cnp) from Acipenser transmontanus (White sturgeon).